The chain runs to 480 residues: Protein nucleotidyltransferase YdiU (480 aa).

Residues G86, G88, R89, K109, D121, G122, R172, and R179 each coordinate ATP. The active-site Proton acceptor is D248. Positions 249 and 258 each coordinate Mg(2+). An ATP-binding site is contributed by D258.

Belongs to the SELO family. Requires Mg(2+) as cofactor. It depends on Mn(2+) as a cofactor.

It catalyses the reaction L-seryl-[protein] + ATP = 3-O-(5'-adenylyl)-L-seryl-[protein] + diphosphate. The catalysed reaction is L-threonyl-[protein] + ATP = 3-O-(5'-adenylyl)-L-threonyl-[protein] + diphosphate. The enzyme catalyses L-tyrosyl-[protein] + ATP = O-(5'-adenylyl)-L-tyrosyl-[protein] + diphosphate. It carries out the reaction L-histidyl-[protein] + UTP = N(tele)-(5'-uridylyl)-L-histidyl-[protein] + diphosphate. It catalyses the reaction L-seryl-[protein] + UTP = O-(5'-uridylyl)-L-seryl-[protein] + diphosphate. The catalysed reaction is L-tyrosyl-[protein] + UTP = O-(5'-uridylyl)-L-tyrosyl-[protein] + diphosphate. Nucleotidyltransferase involved in the post-translational modification of proteins. It can catalyze the addition of adenosine monophosphate (AMP) or uridine monophosphate (UMP) to a protein, resulting in modifications known as AMPylation and UMPylation. This Salmonella paratyphi C (strain RKS4594) protein is Protein nucleotidyltransferase YdiU.